We begin with the raw amino-acid sequence, 622 residues long: Interleukin-1 receptor-associated kinase-like 2 (622 aa).

In terms of domain architecture, Death spans leucine 13–lysine 94. The Protein kinase domain occupies phenylalanine 208–alanine 473. ATP contacts are provided by residues isoleucine 214 to isoleucine 222, lysine 235, and lysine 335 to asparagine 338. 2 disordered regions span residues arginine 511–serine 532 and leucine 553–tryptophan 591. 2 stretches are compositionally biased toward polar residues: residues serine 513–proline 523 and glutamine 561–serine 590.

This sequence belongs to the protein kinase superfamily. TKL Ser/Thr protein kinase family. Pelle subfamily. As to quaternary structure, interacts with MYD88. IL-1 stimulation leads to the formation of a signaling complex which dissociates from the IL-1 receptor following the binding of PELI1. As to expression, ubiquitously expressed, with a higher expression observed in brain, spleen and liver. Isoform 1 and isoform 2 are considered agonist and isoform 3 and isoform 4 are considered antagonist.

Its function is as follows. Binds to the IL-1 type I receptor following IL-1 engagement, triggering intracellular signaling cascades leading to transcriptional up-regulation and mRNA stabilization. The chain is Interleukin-1 receptor-associated kinase-like 2 (Irak2) from Mus musculus (Mouse).